We begin with the raw amino-acid sequence, 506 residues long: Maturase K (506 aa).

Belongs to the intron maturase 2 family. MatK subfamily.

It is found in the plastid. Its subcellular location is the chloroplast. Functionally, usually encoded in the trnK tRNA gene intron. Probably assists in splicing its own and other chloroplast group II introns. The protein is Maturase K of Mentzelia lindleyi (Blazing star).